The sequence spans 339 residues: Cathepsin B (339 aa).

The first 17 residues, 1–17, serve as a signal peptide directing secretion; sequence MWWLWASLCCLLALGDA. A propeptide spans 18 to 79 (activation peptide); sequence RSRPSFHPLS…QRVMFTEDLK (62 aa). Intrachain disulfides connect Cys-93–Cys-122, Cys-105–Cys-150, Cys-141–Cys-207, Cys-142–Cys-146, Cys-179–Cys-211, and Cys-187–Cys-198. The active site involves Cys-108. N-linked (GlcNAc...) asparagine glycosylation occurs at Asn-192. Lys-220 carries the post-translational modification N6-acetyllysine. Catalysis depends on residues His-278 and Asn-298. Residues 334–339 constitute a propeptide that is removed on maturation; sequence QYWEKI.

This sequence belongs to the peptidase C1 family. Dimer of a heavy chain and a light chain cross-linked by a disulfide bond. Interacts with SRPX2. Directly interacts with SHKBP1.

The protein localises to the lysosome. The protein resides in the melanosome. Its subcellular location is the secreted. It is found in the extracellular space. It localises to the apical cell membrane. It carries out the reaction Hydrolysis of proteins with broad specificity for peptide bonds. Preferentially cleaves -Arg-Arg-|-Xaa bonds in small molecule substrates (thus differing from cathepsin L). In addition to being an endopeptidase, shows peptidyl-dipeptidase activity, liberating C-terminal dipeptides.. Functionally, thiol protease which is believed to participate in intracellular degradation and turnover of proteins. Cleaves matrix extracellular phosphoglycoprotein MEPE. Involved in the solubilization of cross-linked TG/thyroglobulin in the thyroid follicle lumen. Has also been implicated in tumor invasion and metastasis. This chain is Cathepsin B (CTSB), found in Macaca fascicularis (Crab-eating macaque).